We begin with the raw amino-acid sequence, 79 residues long: uncharacterized protein (79 aa).

This is an uncharacterized protein from Ovis aries (Sheep).